A 251-amino-acid chain; its full sequence is Carboxy-S-adenosyl-L-methionine synthase (251 aa).

S-adenosyl-L-methionine contacts are provided by residues Tyr-48, Gly-73 to Ser-75, Asn-140, and Arg-207.

It belongs to the class I-like SAM-binding methyltransferase superfamily. Cx-SAM synthase family. Homodimer.

It carries out the reaction prephenate + S-adenosyl-L-methionine = carboxy-S-adenosyl-L-methionine + 3-phenylpyruvate + H2O. Functionally, catalyzes the conversion of S-adenosyl-L-methionine (SAM) to carboxy-S-adenosyl-L-methionine (Cx-SAM). The chain is Carboxy-S-adenosyl-L-methionine synthase from Hydrogenovibrio crunogenus (strain DSM 25203 / XCL-2) (Thiomicrospira crunogena).